Here is a 1237-residue protein sequence, read N- to C-terminus: MTWIPLHCHSQYSILDATCSIKKFVAKAVEYHIPALALTDHGNLFGAVDFYKTCKQNAIKPIIGCELYVAPSSRFDKKKERKSQVANHLILLCKDEEGYRNLCLLSSLAYTEGFYYFPRIDRELLKQHSKGLICLSACLSGSIAQAALESEEALEKDLLWYQDLFQEDFFSEVQLHKSSEEKIALFEEEWLRQNYYQFIEKQLKVKDAVLTVSKRLGISSVATNDIHYLDPDDWLAHEILLNVQSREPIRTAKQNTYVPNPKRKTYPSREFYFKSPQEMAELFADHPETISNTLIVADRCNLELDFVTKHYPIYVPEDLQKKGSYSEEERYNASSAFLEQLCEQGLKTKYTPELLGHIAQKFPEKDPLTVVKERLSLESTIIISKGMCDYLLIVWDIINWAKDHGIPVGPGRGSGAGSVMLFLLGITEIEPIRFDLFFERFINPERLSYPDIDIDICMIGREKVINYAIERHGKENVAQIITFGTMKAKMAIKDVGRTLDTPLSKVNLIAKKIPDLNATIASALESDPDLRQLYIDDAEAAEIIDMAKKLEGSIRNTGVHAAGVIICGDPLTNHIPICVPKDSSMISTQYSMKPVESVGMLKVDFLGLKTLTSIHVATKAIYKKTGILLQAATLPLNDRNTFSLLHQGKTMGIFQMESRGMQELAKNLRPDAFEEIIAIGALYRPGPMDMIPSFINRKHGKENIEYDHPLMEPILKETFGIMVYQEQVMQIAGSLAKYSLGEGDVLRRAMGKKDHEQMVKEREKFCSRASANGIDPSIATTIFDKMEKFASYGFNKSHAAAYGLITYTTAYLKANYPKEWLAALLTCDYDDIEKVGKLIQEAHSMNIPVLPPDINESGQDFEATQEGIRFSLGAVKGVGVSIVDSIVEEREKNGPYRSLQDFVQRSDFKKVTKKQLESLVDAGSFNCFEPNKDLAIAILNDLYDTFSREKKEAATGVLTFFSLNSMTKDPVKVTISPENIVRRSDKELLKREKELLGVYLTAHPMDAVKHLLPFLSVVQSKDFEGLPHGSVVRTVFLIDKVTTKISSVEHKKFALLQVSDEEDSYELPIWSDMYAEYQDLLEEDRLIYAILTIDRRSDSLRLSCRWMRDLSSVNDTVITECDEVYDRLKNQKIYSSTKKSTGGQSQAMVKKEEPKAIPPVTISLDLNRLRHSHLFTLKGLIRKYSGSRALSLVFTKDNQRIASISPDSDFFVTEDISAFLQEIETTDIPARILATAV.

It belongs to the DNA polymerase type-C family. DnaE subfamily. As to quaternary structure, DNA polymerase III contains a core (composed of alpha, epsilon and theta chains) that associates with a tau subunit. This core dimerizes to form the PolIII' complex. PolIII' associates with the gamma complex (composed of gamma, delta, delta', psi and chi chains) and with the beta chain to form the complete DNA polymerase III complex.

It localises to the cytoplasm. It catalyses the reaction DNA(n) + a 2'-deoxyribonucleoside 5'-triphosphate = DNA(n+1) + diphosphate. Functionally, DNA polymerase III is a complex, multichain enzyme responsible for most of the replicative synthesis in bacteria. This DNA polymerase also exhibits 3' to 5' exonuclease activity. The alpha chain is the DNA polymerase. This chain is DNA polymerase III subunit alpha (dnaE), found in Chlamydia muridarum (strain MoPn / Nigg).